The primary structure comprises 326 residues: Target of rapamycin complex subunit LST8 (326 aa).

Residue Met1 is modified to N-acetylmethionine. WD repeat units lie at residues Met1–Thr37, His40–Ser80, Gly83–Gln122, Gln126–Leu165, and Glu168–Val207. Thr51 carries the phosphothreonine modification. Residue Lys86 forms a Glycyl lysine isopeptide (Lys-Gly) (interchain with G-Cter in SUMO3) linkage. Residues Lys215, Lys245, and Lys261 each participate in a glycyl lysine isopeptide (Lys-Gly) (interchain with G-Cter in SUMO3) cross-link. Residues Ala218–Glu257 form a WD 6 repeat. Residues Ser268–Gly309 form a WD 7 repeat. Lys305 participates in a covalent cross-link: Glycyl lysine isopeptide (Lys-Gly) (interchain with G-Cter in SUMO3); alternate. Residues Lys305 and Lys313 each participate in a glycyl lysine isopeptide (Lys-Gly) (interchain with G-Cter in ubiquitin); alternate cross-link. Lys313 participates in a covalent cross-link: Glycyl lysine isopeptide (Lys-Gly) (interchain with G-Cter in SUMO1); alternate.

Belongs to the WD repeat LST8 family. As to quaternary structure, part of the mechanistic target of rapamycin complex 1 (mTORC1) which contains MTOR, MLST8 and RPTOR. mTORC1 associates with AKT1S1/PRAS40, which inhibits its activity. mTORC1 binds to and is inhibited by FKBP12-rapamycin. Within mTORC1, interacts directly with MTOR and RPTOR. Component of the mechanistic target of rapamycin complex 2 (mTORC2), consisting in two heterotretramers composed of MTOR, MLST8, RICTOR and MAPKAP1/SIN1. Contrary to mTORC1, mTORC2 does not bind to and is not sensitive to FKBP12-rapamycin. mTORC1 and mTORC2 associate with DEPTOR, which regulates their activity. Interacts with RHEB. Interacts with MEAK7. Interacts with SIK3. Interacts with SLC38A7; this interaction promotes the recruitment of mTORC1 to the lysosome and its subsequent activation. In terms of processing, phosphorylation at Thr-51 by CDK1 promotes ubiquitination by the SCF(FBXW7) complex, followed by degradation. Ubiquitination by the SCF(FBXW7) and SCF(FBXW11) complexes following phosphorylation at Thr-51 by CDK1, leads to its degradation by the proteasome. Ubiquitination at Lys-305 and Lys-313 by TRAF2 via 'Lys-63'-linked polyubiquitin chains inhibits formation of the mTORC2 complex, while promoting formation of the mTORC1 complex: ubiquitination disrupts the interaction between MLST8 and MAPKAP1/SIN1 to favor mTORC1 assembly. Deubiquitination at Lys-305 and Lys-313 by OTUD7B promotes MLST8 interaction with MAPKAP1/SIN1, facilitating mTORC2 assembly. Post-translationally, sumoylation with SUMO1, SUMO2 and SUMO3 promotes assembly of both mTORC1 and mTORC2 complexes.

It localises to the lysosome membrane. The protein resides in the cytoplasm. Its function is as follows. Subunit of both mTORC1 and mTORC2, which regulates cell growth and survival in response to nutrient and hormonal signals. mTORC1 is activated in response to growth factors or amino acids. In response to nutrients, mTORC1 is recruited to the lysosome membrane and promotes protein, lipid and nucleotide synthesis by phosphorylating several substrates, such as ribosomal protein S6 kinase (RPS6KB1 and RPS6KB2) and EIF4EBP1 (4E-BP1). In the same time, it inhibits catabolic pathways by phosphorylating the autophagy initiation components ULK1 and ATG13, as well as transcription factor TFEB, a master regulators of lysosomal biogenesis and autophagy. The mTORC1 complex is inhibited in response to starvation and amino acid depletion. Within mTORC1, MLST8 interacts directly with MTOR and enhances its kinase activity. In nutrient-poor conditions, stabilizes the MTOR-RPTOR interaction and favors RPTOR-mediated inhibition of MTOR activity. As part of the mTORC2 complex, transduces signals from growth factors to pathways involved in proliferation, cytoskeletal organization, lipogenesis and anabolic output. mTORC2 is also activated by growth factors, but seems to be nutrient-insensitive. In response to growth factors, mTORC2 phosphorylates and activates AGC protein kinase family members, including AKT (AKT1, AKT2 and AKT3), PKC (PRKCA, PRKCB and PRKCE) and SGK1. mTORC2 functions upstream of Rho GTPases to regulate the actin cytoskeleton, probably by activating one or more Rho-type guanine nucleotide exchange factors. mTORC2 promotes the serum-induced formation of stress-fibers or F-actin. mTORC2 plays a critical role in AKT1 activation by mediating phosphorylation of different sites depending on the context, such as 'Thr-450', 'Ser-473', 'Ser-477' or 'Thr-479', facilitating the phosphorylation of the activation loop of AKT1 on 'Thr-308' by PDPK1/PDK1 which is a prerequisite for full activation. mTORC2 regulates the phosphorylation of SGK1 at 'Ser-422'. mTORC2 also modulates the phosphorylation of PRKCA on 'Ser-657'. Within mTORC2, MLST8 acts as a bridge between MAPKAP1/SIN1 and MTOR. In Mus musculus (Mouse), this protein is Target of rapamycin complex subunit LST8.